A 364-amino-acid chain; its full sequence is MPHSYPALSAEQKKELSDIALRIVAPGKGILAADESVGSMAKRLSQIGVENTEENRRLYRQVLFSADDRVKKCIGGVIFFHETLYQKDDNGVPFVRTIQDKGIVVGIKVDKGVVPLAGTDGETTTQGLDGLSERCAQYKKDGADFAKWRCVLKISERTPSALAILENANVLARYASICQQNGIVPIVEPEILPDGDHDLKRCQYVTEKVLAAVYKALSDHHVYLEGTLLKPNMVTPGHACPIKYTPEEIAMATVTALRRTVPPAVPGVTFLSGGQSEEEASLNLNAINRCPLPRPWALTFSYGRALQASALNAWRGQRDNAGAATEEFIKRAEVNGLAAQGKYEGSGEDGGAAAQSLYIANHAY.

Tyr5 carries the phosphotyrosine modification. A phosphoserine mark is found at Ser36, Ser39, and Ser45. Arg56 lines the substrate pocket. Lys111 bears the N6-acetyllysine mark. Ser132 is modified (phosphoserine). Lys147 serves as a coordination point for substrate. Glu188 acts as the Proton acceptor in catalysis. Lys230 (schiff-base intermediate with dihydroxyacetone-P) is an active-site residue.

It belongs to the class I fructose-bisphosphate aldolase family. As to quaternary structure, homotetramer. Interacts with ATP6V1E1.

The enzyme catalyses beta-D-fructose 1,6-bisphosphate = D-glyceraldehyde 3-phosphate + dihydroxyacetone phosphate. It participates in carbohydrate degradation; glycolysis; D-glyceraldehyde 3-phosphate and glycerone phosphate from D-glucose: step 4/4. The chain is Fructose-bisphosphate aldolase C (ALDOC) from Macaca fascicularis (Crab-eating macaque).